The following is an 83-amino-acid chain: Neurotoxin-1'' (83 aa).

The first 19 residues, 1-19 (MNYLVMISLALLLMIGVES), serve as a signal peptide directing secretion. Residues 21–82 (RDGYIVYPNN…PIKDTSRKCT (62 aa)) enclose the LCN-type CS-alpha/beta domain. 4 disulfide bridges follow: C31-C81, C35-C53, C39-C63, and C43-C65. Residue R83 is a propeptide, removed by a carboxypeptidase (in neurotoxin-1/1').

This sequence belongs to the long (4 C-C) scorpion toxin superfamily. Sodium channel inhibitor family. Alpha subfamily. In terms of tissue distribution, expressed by the venom gland.

Its subcellular location is the secreted. In terms of biological role, alpha toxins bind voltage-independently at site-3 of sodium channels (Nav) and inhibit the inactivation of the activated channels, thereby blocking neuronal transmission. Is active against mammals and binds with high affinity rat brain synaptosomes. The chain is Neurotoxin-1'' from Androctonus australis (Sahara scorpion).